Reading from the N-terminus, the 446-residue chain is MGKYFGTDGVRGVANSELTPELAFKLGRAGGYVLTKEAAQPKVLIGRDTRISGEMLEASLVAGLLSIGAEVMRLGVISTPGVAFLTKQLSATAGIMISASHNPVEDNGIKFFGSDGFKLLDSQEEEIEALIDGEDTMPRPIGGDVGQLNDYFEGSQKYMQFLKQTVEGGFEGIHVAIDCANGAASSLATHVLADLDADISSMGSSPNGTNINACCGSTHPEELAKLVVEKQADVGLAFDGDADRLIAVDEKGEIVDGDKIMYIIASYLKEQGRLNNNTIVTTVMSNLGFYKALEEKQIETKQTAVGDRYVMEEMRKGNYNLGGEQSGHIIFLDYNTTGDGLLTGVQLLNIMKQTGKPLSELAAGMKTFPQCLINVRVTDKDAVKNNALVQQEIKRVEEAMAGEGRILVRPSGTEPLVRVMVEAKTDELCQQYANQIVDVVKEQLGA.

Catalysis depends on S100, which acts as the Phosphoserine intermediate. S100, D239, D241, and D243 together coordinate Mg(2+). S100 bears the Phosphoserine mark.

This sequence belongs to the phosphohexose mutase family. Mg(2+) serves as cofactor. In terms of processing, activated by phosphorylation.

The enzyme catalyses alpha-D-glucosamine 1-phosphate = D-glucosamine 6-phosphate. Its function is as follows. Catalyzes the conversion of glucosamine-6-phosphate to glucosamine-1-phosphate. This chain is Phosphoglucosamine mutase, found in Shouchella clausii (strain KSM-K16) (Alkalihalobacillus clausii).